Consider the following 607-residue polypeptide: Rap1 GTPase-GDP dissociation stimulator 1-B (607 aa).

5 ARM repeats span residues 79–118 (ELMR…NICY), 170–211 (DSLQ…NLAE), 347–390 (DGNC…NLAI), 391–431 (PVVN…MLID), and 479–519 (SKDV…LIAA).

As to quaternary structure, interacts with ralB. Probably interacts with the post-translationally isoprenylated (geranyl-geranylation) forms of ral proteins. Interacts with both GDP-bound and GTP-bound forms of ralA, but interaction is much stronger with ralA-GDP.

It is found in the cytoplasm. It localises to the cytosol. The protein localises to the endoplasmic reticulum. The protein resides in the mitochondrion. In terms of biological role, stimulates GDP/GTP exchange reaction of a group of small GTP-binding proteins (G proteins) including Rap1a/Rap1b, RhoA, RhoB and KRas, by stimulating the dissociation of GDP from and the subsequent binding of GTP to each small G protein. The sequence is that of Rap1 GTPase-GDP dissociation stimulator 1-B (rap1gds1-b) from Xenopus laevis (African clawed frog).